We begin with the raw amino-acid sequence, 156 residues long: Putative pre-16S rRNA nuclease (156 aa).

Belongs to the YqgF nuclease family.

The protein resides in the cytoplasm. Its function is as follows. Could be a nuclease involved in processing of the 5'-end of pre-16S rRNA. This is Putative pre-16S rRNA nuclease from Gloeobacter violaceus (strain ATCC 29082 / PCC 7421).